A 339-amino-acid polypeptide reads, in one-letter code: Methylthioribose-1-phosphate isomerase (339 aa).

Residues 49 to 51 (RGA), arginine 86, and glutamine 187 contribute to the substrate site. The active-site Proton donor is aspartate 228. 238 to 239 (NK) lines the substrate pocket.

Belongs to the eIF-2B alpha/beta/delta subunits family. MtnA subfamily.

The enzyme catalyses 5-(methylsulfanyl)-alpha-D-ribose 1-phosphate = 5-(methylsulfanyl)-D-ribulose 1-phosphate. It participates in amino-acid biosynthesis; L-methionine biosynthesis via salvage pathway; L-methionine from S-methyl-5-thio-alpha-D-ribose 1-phosphate: step 1/6. Its function is as follows. Catalyzes the interconversion of methylthioribose-1-phosphate (MTR-1-P) into methylthioribulose-1-phosphate (MTRu-1-P). The sequence is that of Methylthioribose-1-phosphate isomerase from Cronobacter sakazakii (strain ATCC BAA-894) (Enterobacter sakazakii).